The following is a 295-amino-acid chain: Methionine aminopeptidase (295 aa).

Residue His-62 participates in substrate binding. The a divalent metal cation site is built by Asp-82, Asp-93, and His-153. His-161 provides a ligand contact to substrate. The a divalent metal cation site is built by Glu-187 and Glu-280.

The protein belongs to the peptidase M24A family. Methionine aminopeptidase archaeal type 2 subfamily. In terms of assembly, monomer. It depends on Co(2+) as a cofactor. The cofactor is Zn(2+). Requires Mn(2+) as cofactor. Fe(2+) is required as a cofactor.

The enzyme catalyses Release of N-terminal amino acids, preferentially methionine, from peptides and arylamides.. Functionally, removes the N-terminal methionine from nascent proteins. The N-terminal methionine is often cleaved when the second residue in the primary sequence is small and uncharged (Met-Ala-, Cys, Gly, Pro, Ser, Thr, or Val). This chain is Methionine aminopeptidase, found in Pyrococcus horikoshii (strain ATCC 700860 / DSM 12428 / JCM 9974 / NBRC 100139 / OT-3).